Here is a 374-residue protein sequence, read N- to C-terminus: Beta-lytic metalloendopeptidase (374 aa).

Residues 1 to 24 (MKKISKAGLGLALVCALATIGGNA) form the signal peptide. A propeptide spanning residues 25 to 195 (ARRATAQRRG…RQGRPGRAAV (171 aa)) is cleaved from the precursor. The interval 128-187 (PTRQGAGDAGPRQSAAGAVRAFRRQRAGGRAARRRRVPAGLRPPVQRTAPGQGGFGPLRQ) is disordered. Over residues 148-164 (AFRRQRAGGRAARRRRV) the composition is skewed to basic residues. Cysteine 261 and cysteine 307 are oxidised to a cystine. Zn(2+) contacts are provided by histidine 316 and histidine 318. The cysteines at positions 351 and 364 are disulfide-linked.

Belongs to the peptidase M23A family. The cofactor is Zn(2+).

Its subcellular location is the secreted. It carries out the reaction Cleavage of N-acetylmuramoyl-|-Ala, and of the insulin B chain at 23-Gly-|-Phe-24 &gt; 18-Val-|-Cys(SO3H).. In Achromobacter lyticus, this protein is Beta-lytic metalloendopeptidase.